The primary structure comprises 258 residues: Acyl-[acyl-carrier-protein]--UDP-N-acetylglucosamine O-acyltransferase (258 aa).

It belongs to the transferase hexapeptide repeat family. LpxA subfamily. Homotrimer.

Its subcellular location is the cytoplasm. The catalysed reaction is a (3R)-hydroxyacyl-[ACP] + UDP-N-acetyl-alpha-D-glucosamine = a UDP-3-O-[(3R)-3-hydroxyacyl]-N-acetyl-alpha-D-glucosamine + holo-[ACP]. It functions in the pathway glycolipid biosynthesis; lipid IV(A) biosynthesis; lipid IV(A) from (3R)-3-hydroxytetradecanoyl-[acyl-carrier-protein] and UDP-N-acetyl-alpha-D-glucosamine: step 1/6. Involved in the biosynthesis of lipid A, a phosphorylated glycolipid that anchors the lipopolysaccharide to the outer membrane of the cell. This chain is Acyl-[acyl-carrier-protein]--UDP-N-acetylglucosamine O-acyltransferase, found in Pseudomonas aeruginosa (strain LESB58).